Consider the following 249-residue polypeptide: MGRGRVELKRIENKINRQVTFAKRRNGLLKKAYELSVLCDAEVALIIFSNRGKLYEFCSTQSMTKTLEKYQKCSYAGPETAVQNRESEQLKASRNEYLKLKARVENLQRTQRNLLGEDLDSLGIKELESLEKQLDSSLKHVRTTRTKHLVDQLTELQRKEQMVSEANRCLRRKLEESNHVRGQQVWEQGCNLIGYERQPEVQQPLHGGNGFFHPLDAAGEPTLQIGYPAEHHEAMNSACMNTYMPPWLP.

The region spanning 1-61 is the MADS-box domain; sequence MGRGRVELKR…GKLYEFCSTQ (61 aa). One can recognise a K-box domain in the interval 90–180; sequence LKASRNEYLK…RRKLEESNHV (91 aa).

As to quaternary structure, may interact with the K-box of MADS6. May interact with MADS13 and MADS18. As to expression, expressed in lodicules, stamens and carpels.

The protein resides in the nucleus. Probable transcription factor. May be involved in the control of flowering time. The sequence is that of MADS-box transcription factor 7 (MADS7) from Oryza sativa subsp. japonica (Rice).